A 445-amino-acid chain; its full sequence is Adenylyltransferase and sulfurtransferase MOCS3 (445 aa).

The disordered stretch occupies residues 49 to 70; the sequence is LPPSAAAEVEPTGSPSSSSSAA. Residues Gly-106, Asp-127, 134–138, Lys-151, and 170–171 each bind ATP; these read DNLHR and NN. Residues Cys-211 and Cys-214 each contribute to the Zn(2+) site. Catalysis depends on Cys-228, which acts as the Glycyl thioester intermediate; for adenylyltransferase activity. Zn(2+) is bound by residues Cys-286 and Cys-289. The 102-residue stretch at 342 to 443 folds into the Rhodanese domain; it reads SGRPHLLVDV…WAKEVDPSFL (102 aa). Cys-403 (cysteine persulfide intermediate; for sulfurtransferase activity) is an active-site residue.

It in the N-terminal section; belongs to the HesA/MoeB/ThiF family. UBA4 subfamily. Zn(2+) is required as a cofactor.

Its subcellular location is the cytoplasm. It is found in the cytosol. The catalysed reaction is [molybdopterin-synthase sulfur-carrier protein]-C-terminal Gly-Gly + ATP + H(+) = [molybdopterin-synthase sulfur-carrier protein]-C-terminal Gly-Gly-AMP + diphosphate. The enzyme catalyses [molybdopterin-synthase sulfur-carrier protein]-C-terminal Gly-Gly-AMP + S-sulfanyl-L-cysteinyl-[cysteine desulfurase] + AH2 = [molybdopterin-synthase sulfur-carrier protein]-C-terminal-Gly-aminoethanethioate + L-cysteinyl-[cysteine desulfurase] + A + AMP + 2 H(+). The protein operates within tRNA modification; 5-methoxycarbonylmethyl-2-thiouridine-tRNA biosynthesis. Its pathway is cofactor biosynthesis; molybdopterin biosynthesis. Functionally, plays a central role in 2-thiolation of mcm(5)S(2)U at tRNA wobble positions of cytosolic tRNA(Lys), tRNA(Glu) and tRNA(Gln). Also essential during biosynthesis of the molybdenum cofactor. Acts by mediating the C-terminal thiocarboxylation of sulfur carriers URM1 and MOCS2A. Its N-terminus first activates URM1 and MOCS2A as acyl-adenylates (-COAMP), then the persulfide sulfur on the catalytic cysteine is transferred to URM1 and MOCS2A to form thiocarboxylation (-COSH) of their C-terminus. The reaction probably involves hydrogen sulfide that is generated from the persulfide intermediate and that acts as a nucleophile towards URM1 and MOCS2A. Subsequently, a transient disulfide bond is formed. Does not use thiosulfate as sulfur donor; NFS1 probably acting as a sulfur donor for thiocarboxylation reactions. The chain is Adenylyltransferase and sulfurtransferase MOCS3 from Oryza sativa subsp. japonica (Rice).